A 687-amino-acid chain; its full sequence is Dictomallein (687 aa).

Disordered regions lie at residues Met-1–Leu-45 and Thr-73–Ala-112. The region spanning Pro-233–Ala-501 is the Peptidase M66 domain. His-393 provides a ligand contact to Zn(2+). Residue Glu-394 is part of the active site. Zn(2+) contacts are provided by His-397 and His-403.

Belongs to the dictomallein family. Zn(2+) serves as cofactor.

This is Dictomallein (dtmL) from Burkholderia mallei (strain NCTC 10247).